The following is an 892-amino-acid chain: Protein FAM193B (892 aa).

Disordered regions lie at residues 1–78, 164–192, 237–321, and 379–403; these read MTRR…TSSQ, SCGGDSHSSSSSSSSSSSSSSSCHGNSGD, EHHQ…PLLK, and DEGLGEEEDSSSERSSCTSSSTHPR. Residues 28 to 37 show a composition bias toward pro residues; it reads APEPQPPPPS. Residues 56-65 show a composition bias toward basic and acidic residues; that stretch reads DGPREEEEPK. A compositionally biased stretch (low complexity) spans 169 to 185; that stretch reads SHSSSSSSSSSSSSSSS. 3 stretches are compositionally biased toward pro residues: residues 248 to 258, 274 to 285, and 309 to 321; these read PNSPTGPPPHP, YPPPLPTTPVAP, and SPHPPSTSMPLLK. Over residues 379–388 the composition is skewed to acidic residues; it reads DEGLGEEEDS. The segment covering 391–400 has biased composition (low complexity); that stretch reads ERSSCTSSST. Positions 485-517 form a coiled coil; sequence NSARAAKRARHKLKKKEKEKARLATEALKQVNR. 2 stretches are compositionally biased toward polar residues: residues 587–597 and 610–621; these read LTPSDLSGSSQ and TLGSPQSHTLQA. Disordered stretches follow at residues 587–655 and 671–837; these read LTPS…ENGL and VKTP…SLDD. Positions 637-650 are enriched in pro residues; the sequence is PPPWTEVRGPPPGI. Low complexity predominate over residues 736–757; the sequence is KSQVSSPKQPSKGSEPAKVGSG. Residues S764, S776, and S882 each carry the phosphoserine modification.

It belongs to the FAM193 family.

The protein localises to the cytoplasm. Its subcellular location is the nucleus. This is Protein FAM193B (Fam193b) from Mus musculus (Mouse).